A 305-amino-acid chain; its full sequence is UDP-3-O-acyl-N-acetylglucosamine deacetylase (305 aa).

His79, His238, and Asp242 together coordinate Zn(2+). His265 acts as the Proton donor in catalysis.

It belongs to the LpxC family. It depends on Zn(2+) as a cofactor.

It carries out the reaction a UDP-3-O-[(3R)-3-hydroxyacyl]-N-acetyl-alpha-D-glucosamine + H2O = a UDP-3-O-[(3R)-3-hydroxyacyl]-alpha-D-glucosamine + acetate. It functions in the pathway glycolipid biosynthesis; lipid IV(A) biosynthesis; lipid IV(A) from (3R)-3-hydroxytetradecanoyl-[acyl-carrier-protein] and UDP-N-acetyl-alpha-D-glucosamine: step 2/6. Catalyzes the hydrolysis of UDP-3-O-myristoyl-N-acetylglucosamine to form UDP-3-O-myristoylglucosamine and acetate, the committed step in lipid A biosynthesis. In Haemophilus influenzae (strain 86-028NP), this protein is UDP-3-O-acyl-N-acetylglucosamine deacetylase.